Reading from the N-terminus, the 490-residue chain is Aspartyl/glutamyl-tRNA(Asn/Gln) amidotransferase subunit B (490 aa).

The protein belongs to the GatB/GatE family. GatB subfamily. As to quaternary structure, heterotrimer of A, B and C subunits.

It catalyses the reaction L-glutamyl-tRNA(Gln) + L-glutamine + ATP + H2O = L-glutaminyl-tRNA(Gln) + L-glutamate + ADP + phosphate + H(+). It carries out the reaction L-aspartyl-tRNA(Asn) + L-glutamine + ATP + H2O = L-asparaginyl-tRNA(Asn) + L-glutamate + ADP + phosphate + 2 H(+). Its function is as follows. Allows the formation of correctly charged Asn-tRNA(Asn) or Gln-tRNA(Gln) through the transamidation of misacylated Asp-tRNA(Asn) or Glu-tRNA(Gln) in organisms which lack either or both of asparaginyl-tRNA or glutaminyl-tRNA synthetases. The reaction takes place in the presence of glutamine and ATP through an activated phospho-Asp-tRNA(Asn) or phospho-Glu-tRNA(Gln). This chain is Aspartyl/glutamyl-tRNA(Asn/Gln) amidotransferase subunit B, found in Burkholderia thailandensis (strain ATCC 700388 / DSM 13276 / CCUG 48851 / CIP 106301 / E264).